The primary structure comprises 167 residues: NAD(P)H-quinone oxidoreductase subunit I, chloroplastic (167 aa).

4Fe-4S ferredoxin-type domains are found at residues 55 to 84 (GRIHFEFDKCIACEVCVRVCPIDLPVVDWK) and 95 to 124 (LNYSIDFGICIFCGNCVEYCPTNCLSMTEE). [4Fe-4S] cluster-binding residues include Cys64, Cys67, Cys70, Cys74, Cys104, Cys107, Cys110, and Cys114.

Belongs to the complex I 23 kDa subunit family. As to quaternary structure, NDH is composed of at least 16 different subunits, 5 of which are encoded in the nucleus. [4Fe-4S] cluster is required as a cofactor.

Its subcellular location is the plastid. It localises to the chloroplast thylakoid membrane. The catalysed reaction is a plastoquinone + NADH + (n+1) H(+)(in) = a plastoquinol + NAD(+) + n H(+)(out). It carries out the reaction a plastoquinone + NADPH + (n+1) H(+)(in) = a plastoquinol + NADP(+) + n H(+)(out). Its function is as follows. NDH shuttles electrons from NAD(P)H:plastoquinone, via FMN and iron-sulfur (Fe-S) centers, to quinones in the photosynthetic chain and possibly in a chloroplast respiratory chain. The immediate electron acceptor for the enzyme in this species is believed to be plastoquinone. Couples the redox reaction to proton translocation, and thus conserves the redox energy in a proton gradient. The protein is NAD(P)H-quinone oxidoreductase subunit I, chloroplastic of Vitis vinifera (Grape).